The primary structure comprises 105 residues: Small ribosomal subunit protein uS10 (105 aa).

This sequence belongs to the universal ribosomal protein uS10 family. Part of the 30S ribosomal subunit.

Its function is as follows. Involved in the binding of tRNA to the ribosomes. This is Small ribosomal subunit protein uS10 from Synechococcus elongatus (strain ATCC 33912 / PCC 7942 / FACHB-805) (Anacystis nidulans R2).